The chain runs to 401 residues: Riboflavin biosynthesis protein RibBA (401 aa).

The tract at residues 1 to 203 is DHBP synthase; the sequence is MTDFQFSKVE…IQQLQEYRRK (203 aa). Residues 30-31, Asp35, 142-146, and Glu166 contribute to the D-ribulose 5-phosphate site; these read RE and RNGHT. Glu31 contributes to the Mg(2+) binding site. His145 serves as a coordination point for Mg(2+). The segment at 204–401 is GTP cyclohydrolase II; sequence HDSLVKQISV…QIKMGHMFNF (198 aa). 254-258 serves as a coordination point for GTP; the sequence is RIHSE. Zn(2+)-binding residues include Cys259, Cys270, and Cys272. GTP-binding positions include Gln275, 297 to 299, and Thr319; that span reads EGR. The Proton acceptor; for GTP cyclohydrolase activity role is filled by Asp331. Arg333 (nucleophile; for GTP cyclohydrolase activity) is an active-site residue. GTP-binding residues include Thr354 and Lys359.

The protein in the N-terminal section; belongs to the DHBP synthase family. In the C-terminal section; belongs to the GTP cyclohydrolase II family. Mg(2+) serves as cofactor. Mn(2+) is required as a cofactor. Requires Zn(2+) as cofactor.

The enzyme catalyses D-ribulose 5-phosphate = (2S)-2-hydroxy-3-oxobutyl phosphate + formate + H(+). It catalyses the reaction GTP + 4 H2O = 2,5-diamino-6-hydroxy-4-(5-phosphoribosylamino)-pyrimidine + formate + 2 phosphate + 3 H(+). Its pathway is cofactor biosynthesis; riboflavin biosynthesis; 2-hydroxy-3-oxobutyl phosphate from D-ribulose 5-phosphate: step 1/1. The protein operates within cofactor biosynthesis; riboflavin biosynthesis; 5-amino-6-(D-ribitylamino)uracil from GTP: step 1/4. In terms of biological role, catalyzes the conversion of D-ribulose 5-phosphate to formate and 3,4-dihydroxy-2-butanone 4-phosphate. Its function is as follows. Catalyzes the conversion of GTP to 2,5-diamino-6-ribosylamino-4(3H)-pyrimidinone 5'-phosphate (DARP), formate and pyrophosphate. The polypeptide is Riboflavin biosynthesis protein RibBA (Actinobacillus pleuropneumoniae serotype 5b (strain L20)).